The following is a 103-amino-acid chain: Small ribosomal subunit protein uS10 (103 aa).

It belongs to the universal ribosomal protein uS10 family. As to quaternary structure, part of the 30S ribosomal subunit.

In terms of biological role, involved in the binding of tRNA to the ribosomes. The chain is Small ribosomal subunit protein uS10 from Neisseria gonorrhoeae.